We begin with the raw amino-acid sequence, 156 residues long: Enhancer of split M1 protein (156 aa).

The signal sequence occupies residues 1 to 19; the sequence is MMSQTLTLCCLALVACVYG. Kazal-like domains are found at residues 23–81 and 96–156; these read STND…AWCS and KLEV…EEKC. Cystine bridges form between C29–C62, C33–C55, C102–C135, C106–C128, and C114–C156.

This chain is Enhancer of split M1 protein (Kaz-m1), found in Drosophila melanogaster (Fruit fly).